A 359-amino-acid polypeptide reads, in one-letter code: 3-dehydroquinate synthase (359 aa).

Residues 71–76, 105–109, 129–130, K142, K151, and 169–172 contribute to the NAD(+) site; these read DGEQFK, GVIGD, TT, and CLQT. Residues E184, H247, and H264 each coordinate Zn(2+).

The protein belongs to the sugar phosphate cyclases superfamily. Dehydroquinate synthase family. Requires Co(2+) as cofactor. Zn(2+) is required as a cofactor. The cofactor is NAD(+).

It is found in the cytoplasm. It carries out the reaction 7-phospho-2-dehydro-3-deoxy-D-arabino-heptonate = 3-dehydroquinate + phosphate. Its pathway is metabolic intermediate biosynthesis; chorismate biosynthesis; chorismate from D-erythrose 4-phosphate and phosphoenolpyruvate: step 2/7. Catalyzes the conversion of 3-deoxy-D-arabino-heptulosonate 7-phosphate (DAHP) to dehydroquinate (DHQ). The protein is 3-dehydroquinate synthase of Shewanella sp. (strain ANA-3).